Reading from the N-terminus, the 145-residue chain is MVRERTKKLRGGHYGRGMKAGRGKGKKGGRGNAGMGKHKWIWMVKYDPLHFGGKGFTSHHLSTPDVPINLGELENIFENLKADGFVREENGETVVDLKAAGYDKLLGSGNFSVKSRIIIDKATEKAISKLSAIGSKIENVGNTAE.

Basic residues-rich tracts occupy residues 1 to 13 (MVRERTKKLRGGH) and 19 to 29 (KAGRGKGKKGG). The disordered stretch occupies residues 1–33 (MVRERTKKLRGGHYGRGMKAGRGKGKKGGRGNA).

The protein belongs to the universal ribosomal protein uL15 family. As to quaternary structure, part of the 50S ribosomal subunit.

Functionally, binds to the 23S rRNA. This is Large ribosomal subunit protein uL15 from Thermoplasma volcanium (strain ATCC 51530 / DSM 4299 / JCM 9571 / NBRC 15438 / GSS1).